Consider the following 76-residue polypeptide: Vasotab-TY1 (76 aa).

A signal peptide spans M1–D21. The Kazal-like domain maps to D22–K76. 3 disulfides stabilise this stretch: C23–C60, C27–C53, and C35–C75.

In terms of tissue distribution, expressed by the salivary gland.

The protein resides in the secreted. Functionally, vasodilator protein that inhibits vasoconstriction of isolated rat femoral artery induced by phenylephrine. Since platelet aggregation and vasoconstriction are key hemostatic responses, particularly in small wounds, this protein likely participates in the antihemostatic responses during blood feeding. Blocks L-type calcium channels (Cav1/CACNA1) in left ventricular myocytes isolated from rat hearts. This chain is Vasotab-TY1, found in Tabanus yao (Horsefly).